The following is a 304-amino-acid chain: Aspartate carbamoyltransferase catalytic subunit (304 aa).

Carbamoyl phosphate contacts are provided by arginine 55 and threonine 56. Position 83 (lysine 83) interacts with L-aspartate. Arginine 105, histidine 133, and glutamine 136 together coordinate carbamoyl phosphate. Residues arginine 166 and arginine 220 each contribute to the L-aspartate site. Glycine 261 and proline 262 together coordinate carbamoyl phosphate.

It belongs to the aspartate/ornithine carbamoyltransferase superfamily. ATCase family. As to quaternary structure, heterododecamer (2C3:3R2) of six catalytic PyrB chains organized as two trimers (C3), and six regulatory PyrI chains organized as three dimers (R2).

It carries out the reaction carbamoyl phosphate + L-aspartate = N-carbamoyl-L-aspartate + phosphate + H(+). It participates in pyrimidine metabolism; UMP biosynthesis via de novo pathway; (S)-dihydroorotate from bicarbonate: step 2/3. In terms of biological role, catalyzes the condensation of carbamoyl phosphate and aspartate to form carbamoyl aspartate and inorganic phosphate, the committed step in the de novo pyrimidine nucleotide biosynthesis pathway. The chain is Aspartate carbamoyltransferase catalytic subunit from Caldanaerobacter subterraneus subsp. tengcongensis (strain DSM 15242 / JCM 11007 / NBRC 100824 / MB4) (Thermoanaerobacter tengcongensis).